The chain runs to 255 residues: MLKRRIIPCLDVKEGRVVKGIEFVQLRDIGDPVEIAKYYDESGADELVFLDITASTERRQTMLDVVSAVARKVFIPLTVGGGIRSLEDISSLLKAGADKVSLNTLAVESPSLIREAADRFGSQCIVVAIDVKFKDGEYYVYTYGGKQKTDLLAVEWAKQVAALGAGELLVTSMNQDGKQSGYDLSILEQLREVVDIPIIASGGAGNAEHVVEALEKVDAALLASILHDRKTTVEEVKHVCKSHNLPMRFVSTKMD.

Catalysis depends on residues Asp11 and Asp130.

This sequence belongs to the HisA/HisF family. Heterodimer of HisH and HisF.

It is found in the cytoplasm. It carries out the reaction 5-[(5-phospho-1-deoxy-D-ribulos-1-ylimino)methylamino]-1-(5-phospho-beta-D-ribosyl)imidazole-4-carboxamide + L-glutamine = D-erythro-1-(imidazol-4-yl)glycerol 3-phosphate + 5-amino-1-(5-phospho-beta-D-ribosyl)imidazole-4-carboxamide + L-glutamate + H(+). Its pathway is amino-acid biosynthesis; L-histidine biosynthesis; L-histidine from 5-phospho-alpha-D-ribose 1-diphosphate: step 5/9. Its function is as follows. IGPS catalyzes the conversion of PRFAR and glutamine to IGP, AICAR and glutamate. The HisF subunit catalyzes the cyclization activity that produces IGP and AICAR from PRFAR using the ammonia provided by the HisH subunit. This is Imidazole glycerol phosphate synthase subunit HisF from Exiguobacterium sp. (strain ATCC BAA-1283 / AT1b).